Here is an 848-residue protein sequence, read N- to C-terminus: F-BAR domain only protein 2 (848 aa).

An F-BAR domain is found at 4–250; sequence PYFLENFWGN…NMENTSVESL (247 aa). A coiled-coil region spans residues 87–114; sequence HMELVRKLQELIKEVQKYVDEQAKNHKK. Disordered stretches follow at residues 292–316 and 404–526; these read IPGR…NASN and LSPT…RAES. Phosphoserine occurs at positions 405 and 417. Residues 445 to 460 show a composition bias toward low complexity; sequence PFGPTSTGSSSSLPQS. The 269-residue stretch at 580–848 folds into the MHD domain; it reads ALPIAVAFTE…FATGRYMADC (269 aa).

The protein belongs to the FCHO family. Homodimer.

It localises to the membrane. The protein localises to the clathrin-coated pit. May function in an early step of clathrin-mediated endocytosis. The sequence is that of F-BAR domain only protein 2 (fcho2) from Danio rerio (Zebrafish).